The sequence spans 413 residues: Envelope glycoprotein M (413 aa).

Topologically, residues Met-1–Arg-19 are intravirion. Residues Met-20 to Phe-40 traverse the membrane as a helical segment. Over Ala-41 to Thr-88 the chain is Virion surface. A helical transmembrane segment spans residues Leu-89–Gly-109. Topologically, residues Gly-110–Thr-133 are intravirion. Residues Met-134–Leu-154 form a helical membrane-spanning segment. The Virion surface portion of the chain corresponds to Ser-155 to Thr-160. Residues Leu-161 to Ala-181 form a helical membrane-spanning segment. The Intravirion segment spans residues Ser-182 to Leu-218. The chain crosses the membrane as a helical span at residues Phe-219 to Val-239. The Virion surface portion of the chain corresponds to Leu-240–Thr-251. The chain crosses the membrane as a helical span at residues Gly-252–Val-272. At Ser-273–His-277 the chain is on the intravirion side. The helical transmembrane segment at Val-278 to Leu-298 threads the bilayer. The Virion surface portion of the chain corresponds to Ser-299–Trp-312. A helical membrane pass occupies residues Lys-313 to Leu-333. Topologically, residues Arg-334–Tyr-413 are intravirion.

Belongs to the herpesviridae glycoprotein M family. Interacts (via N-terminus) with gN (via N-terminus). The gM-gN heterodimer forms the gCII complex.

Its subcellular location is the virion membrane. The protein localises to the host Golgi apparatus. It is found in the host trans-Golgi network. The protein resides in the host endosome membrane. It localises to the host nucleus inner membrane. Its function is as follows. Envelope glycoprotein important for virion assembly and egress. Plays a role in the correct incorporation of gH-gL into virion membrane. Directs the glycoprotein N (gN) to the host trans-Golgi network. This chain is Envelope glycoprotein M, found in Psittacid herpesvirus 1 (isolate Amazon parrot/-/97-0001/1997) (PsHV-1).